The following is a 114-amino-acid chain: Replication initiation control protein YabA (114 aa).

Zn(2+) is bound by residues H79, C81, C95, and C98.

The protein belongs to the YabA family. In terms of assembly, homotetramer. Interacts with both DnaA and DnaN, acting as a bridge between these two proteins. The cofactor is Zn(2+).

Its subcellular location is the cytoplasm. The protein localises to the nucleoid. Functionally, involved in control of chromosome replication initiation. Inhibits the cooperative binding of DnaA to the oriC region, thus negatively regulating initiation of chromosome replication. Inhibits the ability of DnaA-ATP to form a helix on DNA; does not disassemble preformed DnaA-DNA helices. Decreases the residence time of DnaA on the chromosome at its binding sites (oriC, replication forks and promoter-binding sites). Tethers DnaA to the replication machinery via the DNA polymerase beta sliding clamp subunit (dnaN). Associates with oriC and other DnaA targets on the chromosome in a DnaA-dependent manner. This is Replication initiation control protein YabA from Lactobacillus gasseri (strain ATCC 33323 / DSM 20243 / BCRC 14619 / CIP 102991 / JCM 1131 / KCTC 3163 / NCIMB 11718 / NCTC 13722 / AM63).